We begin with the raw amino-acid sequence, 316 residues long: Taste receptor type 2 member 3 (316 aa).

At 1 to 7 the chain is on the extracellular side; the sequence is MFGFIEG. A helical transmembrane segment spans residues 8 to 28; sequence VFLVLTITEFILGNLVNGFIV. At 29-50 the chain is on the cytoplasmic side; the sequence is SINSSYWFKSKKISLSNFIITS. A helical transmembrane segment spans residues 51–71; sequence LALFRIFLLWIIFIDSLIIVF. Residues 72 to 86 lie on the Extracellular side of the membrane; it reads SYQTHDSGIMMQLID. A helical membrane pass occupies residues 87-107; that stretch reads VFWTFTNHFSIWLISCLSVFY. Residues 108–128 are Cytoplasmic-facing; sequence CLKIASFSHPSFLWLKWRASR. Residues 129–149 form a helical membrane-spanning segment; sequence VVVGMLWGALLLSCVSTMSLM. Over 150 to 186 the chain is Extracellular; sequence NEFKIYSALTRSKDTPNMTEYIRLKRQEYNLMHVLGN. The N-linked (GlcNAc...) asparagine glycan is linked to N166. The chain crosses the membrane as a helical span at residues 187-207; it reads LWKIPSLIVSLVAYLLLLLSL. Topologically, residues 208-234 are cytoplasmic; sequence GKHTQQMQQYSIDSRDQSAEAHKRAMR. A helical membrane pass occupies residues 235–255; that stretch reads IISSFLLFFLFYFLSFMILSS. Residues 256-266 are Extracellular-facing; the sequence is SRFLPETRIAR. A helical membrane pass occupies residues 267–287; it reads IIGVVISMSYLVGDSFILIVC. The Cytoplasmic portion of the chain corresponds to 288-316; the sequence is NNKLKHTFVAMLPCECGHLKPGSKGPSAS.

The protein belongs to the G-protein coupled receptor T2R family.

The protein localises to the membrane. Its function is as follows. Gustducin-coupled receptor implicated in the perception of bitter compounds in the oral cavity and the gastrointestinal tract. Signals through PLCB2 and the calcium-regulated cation channel TRPM5. This Mus musculus (Mouse) protein is Taste receptor type 2 member 3 (Tas2r3).